The following is a 259-amino-acid chain: Phosphatidylglycerol--prolipoprotein diacylglyceryl transferase (259 aa).

4 helical membrane-spanning segments follow: residues 16–36 (LAISWYSLSYVIGILLGWFYA), 55–75 (FITYAVIGIIVGGRLGFVLLY), 92–112 (EGGMSFHGGALGGIIAAYLFC), and 117–137 (INFLSLTDIIAPVVPIGLFLG). R138 lines the a 1,2-diacyl-sn-glycero-3-phospho-(1'-sn-glycerol) pocket. The next 3 helical transmembrane spans lie at 172–192 (QLYEAFFEGLVLFSILAYATF), 201–221 (GLNSGIFFTFYGLFRITIEIF), and 228–248 (IGFILDSLTMGQILSVPMLLL).

This sequence belongs to the Lgt family.

The protein localises to the cell inner membrane. The catalysed reaction is L-cysteinyl-[prolipoprotein] + a 1,2-diacyl-sn-glycero-3-phospho-(1'-sn-glycerol) = an S-1,2-diacyl-sn-glyceryl-L-cysteinyl-[prolipoprotein] + sn-glycerol 1-phosphate + H(+). Its pathway is protein modification; lipoprotein biosynthesis (diacylglyceryl transfer). Its function is as follows. Catalyzes the transfer of the diacylglyceryl group from phosphatidylglycerol to the sulfhydryl group of the N-terminal cysteine of a prolipoprotein, the first step in the formation of mature lipoproteins. The chain is Phosphatidylglycerol--prolipoprotein diacylglyceryl transferase from Rickettsia rickettsii (strain Iowa).